Here is a 109-residue protein sequence, read N- to C-terminus: Transmembrane protein 233 (109 aa).

The segment at 1–30 is disordered; the sequence is MSQYAPSPDFKRALDSSPEANTEDDKTEED. The Cytoplasmic portion of the chain corresponds to 1-41; sequence MSQYAPSPDFKRALDSSPEANTEDDKTEEDVPMPKNYLWLT. A compositionally biased stretch (acidic residues) spans 21–30; the sequence is NTEDDKTEED. Positions 42–62 form an intramembrane region, helical; it reads IVSCFCPAYPINIVALVFSIM. Over 63–84 the chain is Cytoplasmic; that stretch reads SLNSYNDGDYEGARRLGRNAKW. A helical transmembrane segment spans residues 85–105; the sequence is VAIASIIIGLLIIGISCAVHF. Topologically, residues 106–109 are extracellular; it reads TRNA.

Belongs to the CD225/Dispanin family. Interacts with the giant stinging tree toxin ExTxA (AC P0DQP3). Interacts with Nav1.7/SCN9A. Interacts with Nav1.1/SCN1A, Nav1.2/SCN2A, Nav1.3/SCN3A, Nav1.4/SCN4A, Nav1.5/SCN5A, and Nav1.6/SCN8A.

It localises to the cell membrane. Probable accessory protein of voltage-gated sodium channels. This chain is Transmembrane protein 233, found in Homo sapiens (Human).